The sequence spans 270 residues: 4-hydroxy-tetrahydrodipicolinate reductase (270 aa).

Residues 11 to 16 (GAGGRM) and Glu37 each bind NAD(+). An NADP(+)-binding site is contributed by Arg38. Residues 101–103 (GTT) and 125–128 (APNM) contribute to the NAD(+) site. The Proton donor/acceptor role is filled by His158. His159 lines the (S)-2,3,4,5-tetrahydrodipicolinate pocket. Residue Lys162 is the Proton donor of the active site. 168 to 169 (GT) is a binding site for (S)-2,3,4,5-tetrahydrodipicolinate.

Belongs to the DapB family.

It is found in the cytoplasm. The catalysed reaction is (S)-2,3,4,5-tetrahydrodipicolinate + NAD(+) + H2O = (2S,4S)-4-hydroxy-2,3,4,5-tetrahydrodipicolinate + NADH + H(+). It carries out the reaction (S)-2,3,4,5-tetrahydrodipicolinate + NADP(+) + H2O = (2S,4S)-4-hydroxy-2,3,4,5-tetrahydrodipicolinate + NADPH + H(+). Its pathway is amino-acid biosynthesis; L-lysine biosynthesis via DAP pathway; (S)-tetrahydrodipicolinate from L-aspartate: step 4/4. In terms of biological role, catalyzes the conversion of 4-hydroxy-tetrahydrodipicolinate (HTPA) to tetrahydrodipicolinate. This is 4-hydroxy-tetrahydrodipicolinate reductase from Shewanella putrefaciens (strain CN-32 / ATCC BAA-453).